A 315-amino-acid polypeptide reads, in one-letter code: MTSRMPTVVPCLLGPTASGKTAAALALAARRPVEIISVDSALVYREMDIGTAKPTAEERAVAPHHLIDIVDPTDAYSAAQFRADTLRLTAEIHARGRLPLLVGGTMLYYKALTQGLNDLPAADAEVRATLDADAAREGWPALHARLAALDPVTAARLAPNDSQRIQRALEVFMLTGQTMSALLAAPVMQDDSAALWRFVPIALEPSERSVLHARIEKRFDAMLAGGFIDEVVKLRERGDLLPEMASMRCVGYRQVWEYLDGAVDYSTMRDKGVFATRQLCKRQLTWLRSMPERVVVDCCDPHATARVLEAIEALL.

14–21 (GPTASGKT) contacts ATP. A substrate-binding site is contributed by 16–21 (TASGKT). Interaction with substrate tRNA stretches follow at residues 39-42 (DSAL), 163-167 (QRIQR), and 248-253 (RCVGYR).

It belongs to the IPP transferase family. In terms of assembly, monomer. Requires Mg(2+) as cofactor.

It carries out the reaction adenosine(37) in tRNA + dimethylallyl diphosphate = N(6)-dimethylallyladenosine(37) in tRNA + diphosphate. In terms of biological role, catalyzes the transfer of a dimethylallyl group onto the adenine at position 37 in tRNAs that read codons beginning with uridine, leading to the formation of N6-(dimethylallyl)adenosine (i(6)A). This is tRNA dimethylallyltransferase from Paraburkholderia phytofirmans (strain DSM 17436 / LMG 22146 / PsJN) (Burkholderia phytofirmans).